The following is a 358-amino-acid chain: Methionine import ATP-binding protein MetN (358 aa).

The region spanning 2-247 (ITTTGLTKVY…PGSELAHELF (246 aa)) is the ABC transporter domain. 38 to 45 (GQSGAGKS) provides a ligand contact to ATP.

The protein belongs to the ABC transporter superfamily. Methionine importer (TC 3.A.1.24) family. As to quaternary structure, the complex is composed of two ATP-binding proteins (MetN), two transmembrane proteins (MetI) and a solute-binding protein (MetQ).

The protein resides in the cell membrane. The enzyme catalyses L-methionine(out) + ATP + H2O = L-methionine(in) + ADP + phosphate + H(+). The catalysed reaction is D-methionine(out) + ATP + H2O = D-methionine(in) + ADP + phosphate + H(+). Functionally, part of the ABC transporter complex MetNIQ involved in methionine import. Responsible for energy coupling to the transport system. The protein is Methionine import ATP-binding protein MetN of Streptomyces griseus.